The sequence spans 479 residues: Poly(A) polymerase catalytic subunit (479 aa).

Residues Asp202 and Asp204 contribute to the active site. The Ca(2+) site is built by Asp202, Asp204, and Asp253.

This sequence belongs to the poxviridae poly(A) polymerase catalytic subunit family. Heterodimer of a large (catalytic) subunit and a small (regulatory) subunit.

It catalyses the reaction RNA(n) + ATP = RNA(n)-3'-adenine ribonucleotide + diphosphate. In terms of biological role, polymerase that creates the 3'-poly(A) tail of mRNA's. This chain is Poly(A) polymerase catalytic subunit (OPG063), found in Bos taurus (Bovine).